The sequence spans 69 residues: Large ribosomal subunit protein bL32c (69 aa).

Belongs to the bacterial ribosomal protein bL32 family.

It localises to the plastid. The protein localises to the chloroplast. This Pelargonium hortorum (Common geranium) protein is Large ribosomal subunit protein bL32c.